Here is a 418-residue protein sequence, read N- to C-terminus: Hepatic and glial cell adhesion molecule (418 aa).

Residues 1 to 33 (MKRERGALSRASRALRLSPFVYLLLIQPVPLEG) form the signal peptide. One can recognise an Ig-like V-type domain in the interval 34–142 (VNITSPVRLI…GEKTINLTVD (109 aa)). The Extracellular portion of the chain corresponds to 34 to 240 (VNITSPVRLI…VKITVYRRSS (207 aa)). N35, N138, N167, and N189 each carry an N-linked (GlcNAc...) asparagine glycan. Positions 148 to 234 (PQVLVASTTV…QVRSLPVKIT (87 aa)) constitute an Ig-like C2-type domain. C168 and C217 are disulfide-bonded. The chain crosses the membrane as a helical span at residues 241–261 (LYIILSTGGIFLLVTLVTVCA). The Cytoplasmic portion of the chain corresponds to 262 to 418 (CWKPSKKSRK…DESGQVEISA (157 aa)). Positions 271–418 (KKRKLEKQNS…DESGQVEISA (148 aa)) are disordered. S280 carries the post-translational modification Phosphoserine. Over residues 287 to 308 (NDDRLKSEADTLPRSGEQERKN) the composition is skewed to basic and acidic residues. Residues S321, S352, and S379 each carry the phosphoserine modification. Over residues 341–358 (GYSVSPPVPGRSPGLPIR) the composition is skewed to low complexity. Over residues 385–396 (SSPGRSRSSSRS) the composition is skewed to low complexity.

As to quaternary structure, homodimer. Dimer formation occurs predominantly through cis interactions on the cell surface. Part of a complex containing MLC1, TRPV4, AQP4 and ATP1B1. Interacts with CLCN2. In terms of processing, N-glycosylated.

The protein localises to the cytoplasm. It localises to the cell membrane. Its function is as follows. Involved in regulating cell motility and cell-matrix interactions. May inhibit cell growth through suppression of cell proliferation. In glia, associates and targets CLCN2 at astrocytic processes and myelinated fiber tracts where it may regulate transcellular chloride flux involved in neuron excitability. The sequence is that of Hepatic and glial cell adhesion molecule from Mus musculus (Mouse).